The following is a 116-amino-acid chain: Ribosome-binding factor A (116 aa).

This sequence belongs to the RbfA family. As to quaternary structure, monomer. Binds 30S ribosomal subunits, but not 50S ribosomal subunits or 70S ribosomes.

It is found in the cytoplasm. Functionally, one of several proteins that assist in the late maturation steps of the functional core of the 30S ribosomal subunit. Associates with free 30S ribosomal subunits (but not with 30S subunits that are part of 70S ribosomes or polysomes). Required for efficient processing of 16S rRNA. May interact with the 5'-terminal helix region of 16S rRNA. In Streptococcus pneumoniae (strain Hungary19A-6), this protein is Ribosome-binding factor A.